The following is a 333-amino-acid chain: Protein pelota homolog (333 aa).

This sequence belongs to the eukaryotic release factor 1 family. Pelota subfamily. In terms of assembly, monomer. Requires a divalent metal cation as cofactor.

Its subcellular location is the cytoplasm. Its function is as follows. May function in recognizing stalled ribosomes, interact with stem-loop structures in stalled mRNA molecules, and effect endonucleolytic cleavage of the mRNA. May play a role in the release non-functional ribosomes and degradation of damaged mRNAs. Has endoribonuclease activity. This chain is Protein pelota homolog, found in Pyrobaculum arsenaticum (strain DSM 13514 / JCM 11321 / PZ6).